A 337-amino-acid polypeptide reads, in one-letter code: MTERRDNVSHAPDAIEGPNDGAHAEDTSPGFFSLENLGVAQVQVVGGTLNGFSIGFVAVYILLYEVATNCSLFKTTEACKAVGSYGCEWKDTEVCSWKKECDSDSDGVNPCESLIGYSSLYSGIFASAMIVGSMVGSIIAGKCITMFGLKKSFIIVGVMSVVASALNHISVATNEFWVLCAGRVLMGIGLGVVCVICPMYVNENAHPKLSKVDGVLFQVFITFGIMLAAMLGLILDKTVNYDNDPDMAGRFHGFCAVSSVLSVAMFLVGMFLRESTATFSQDDDGKADGGMDPNEYGWGQMLWPLFMGAVTAGTLQLTGINAVMNYAPKITENLGMD.

The segment at methionine 1–alanine 22 is disordered. Topologically, residues methionine 1–glutamine 43 are cytoplasmic. The chain crosses the membrane as a helical span at residues valine 44–tyrosine 64. Over glutamate 65–serine 119 the chain is Extracellular. Asparagine 69 carries an N-linked (GlcNAc...) asparagine glycan. A helical transmembrane segment spans residues leucine 120 to alanine 140. Residues glycine 141–serine 152 are Cytoplasmic-facing. Residues phenylalanine 153–threonine 173 traverse the membrane as a helical segment. Residues asparagine 174–glutamate 175 are Extracellular-facing. The chain crosses the membrane as a helical span at residues phenylalanine 176–isoleucine 196. Over cysteine 197–glycine 214 the chain is Cytoplasmic. Residues valine 215–leucine 235 traverse the membrane as a helical segment. Residues aspartate 236–arginine 250 are Extracellular-facing. The helical transmembrane segment at phenylalanine 251–phenylalanine 271 threads the bilayer. Topologically, residues leucine 272–glutamine 300 are cytoplasmic. Residues methionine 301–asparagine 321 traverse the membrane as a helical segment. The Extracellular segment spans residues alanine 322–aspartate 337.

Belongs to the major facilitator superfamily. Sugar transporter (TC 2.A.1.1) family.

It is found in the membrane. Functionally, facilitative glucose transporter. The sequence is that of Glucose transporter 2C (THT2C) from Trypanosoma brucei brucei.